Here is a 318-residue protein sequence, read N- to C-terminus: tRNA U34 carboxymethyltransferase (318 aa).

Residues K88, W102, K107, G126, M192, Y196, and R311 each contribute to the carboxy-S-adenosyl-L-methionine site.

Belongs to the class I-like SAM-binding methyltransferase superfamily. CmoB family. In terms of assembly, homotetramer.

The catalysed reaction is carboxy-S-adenosyl-L-methionine + 5-hydroxyuridine(34) in tRNA = 5-carboxymethoxyuridine(34) in tRNA + S-adenosyl-L-homocysteine + H(+). Catalyzes carboxymethyl transfer from carboxy-S-adenosyl-L-methionine (Cx-SAM) to 5-hydroxyuridine (ho5U) to form 5-carboxymethoxyuridine (cmo5U) at position 34 in tRNAs. This Pseudomonas fluorescens (strain Pf0-1) protein is tRNA U34 carboxymethyltransferase.